A 383-amino-acid polypeptide reads, in one-letter code: Probable lipid transporter atnI (383 aa).

Transmembrane regions (helical) follow at residues 46 to 66 (VLFS…AIMF) and 71 to 91 (AWVV…RSLF). An N-linked (GlcNAc...) asparagine glycan is attached at N94. Helical transmembrane passes span 104-124 (FTIF…MTLG), 144-164 (FGHI…VGAA), 182-202 (IYMG…GLFI), 231-251 (WLFY…IFRL), and 269-289 (WFEY…LNVA). The segment at 305 to 383 (VSRKEKKQRK…YDNRGNEVRP (79 aa)) is disordered. Residues 307-316 (RKEKKQRKRE) show a composition bias toward basic residues. Positions 317-329 (KKEAKIAEKEAKK) are enriched in basic and acidic residues.

This sequence belongs to the lipid-translocating exporter (LTE) (TC 9.A.26.1) family.

It is found in the membrane. Its pathway is secondary metabolite biosynthesis. Functionally, probable lipid transporter; part of the gene cluster that mediates the biosynthesis of aspercryptins, linear lipopeptides built from six amino acids including 2 highly unusual and nonproteogenic amino acids, 2-amino-octanoic acid (2aoa) and 2-amino-dodecanol (2adol). The core structure of aspercryptins is as follows: Ser/Ala-Thr-Ile/Val-2aoa-Asn-2adol. The first step of aspercryptin biosynthesis is the generation of the fatty acid precursors, octanoic and dodecanoic acids, by the FAS subunits atnF and atnM. The fatty acid precursors are likely transformed into the corresponding alpha-amino fatty acids in three steps. First, they are hydroxylated by the cytochrome P450 monooxygenase atnE, then oxidized to the corresponding alpha-keto acids by the NAD(P)-dependent oxidoreductase atnD, and finally converted to the alpha-amino fatty acids by the PLP-dependent aminotransferases atnH or atnJ. the alpha-amino fatty acids, 2-amino-octanoic and 2-amino-dodecanoic acids, are recognized, activated, and covalently tethered to the NRPS atnA by its fourth and sixth adenylation domains. The second module of atnA is the Thr module and contains an epimerase (E) domain responsible for the epimerization of Thr to D-allo-Thr. Additionally, despite atnA having only one epimerase domain, the first amino acid of aspercryptin A1 is D-Ser, suggesting that serine is either loaded directly as D-Ser on the first module or that the epimerase domain in the threonine module epimerizes both L-Ser and L-Thr. After condensation of the hexapeptide of aspercryptin, the C-terminal reductase (TE) domain might be involved in the reductive release and production of the aldehyde hexapeptide. Further reduction would generate aspercryptins. The variety of aspercryptins produced reflects the flexibility of the atnA NRPS, allowing incorporation of alanine instead of serine, valine for isoleucine, and a C10 fatty amino alcohol instead of the C12 version. AtnB seems to be involved in the selectivity for Ile versus Val by the third module. Moreover, type B, C and D aspercryptins have an additional N-terminal cichorine, acetyl and propionyl group respectively. In Emericella nidulans (strain FGSC A4 / ATCC 38163 / CBS 112.46 / NRRL 194 / M139) (Aspergillus nidulans), this protein is Probable lipid transporter atnI.